Consider the following 214-residue polypeptide: 3-isopropylmalate dehydratase small subunit (214 aa).

This sequence belongs to the LeuD family. LeuD type 1 subfamily. As to quaternary structure, heterodimer of LeuC and LeuD.

The catalysed reaction is (2R,3S)-3-isopropylmalate = (2S)-2-isopropylmalate. The protein operates within amino-acid biosynthesis; L-leucine biosynthesis; L-leucine from 3-methyl-2-oxobutanoate: step 2/4. Functionally, catalyzes the isomerization between 2-isopropylmalate and 3-isopropylmalate, via the formation of 2-isopropylmaleate. The sequence is that of 3-isopropylmalate dehydratase small subunit from Pseudomonas entomophila (strain L48).